The following is a 209-amino-acid chain: Transcription antitermination protein NusB (209 aa).

It belongs to the NusB family.

Functionally, involved in transcription antitermination. Required for transcription of ribosomal RNA (rRNA) genes. Binds specifically to the boxA antiterminator sequence of the ribosomal RNA (rrn) operons. This chain is Transcription antitermination protein NusB, found in Cyanothece sp. (strain PCC 7425 / ATCC 29141).